A 398-amino-acid polypeptide reads, in one-letter code: 4-hydroxy-3-methylbut-2-enyl diphosphate reductase (398 aa).

[4Fe-4S] cluster is bound at residue Cys66. His96 is a binding site for (2E)-4-hydroxy-3-methylbut-2-enyl diphosphate. His96 is a binding site for dimethylallyl diphosphate. His96 contributes to the isopentenyl diphosphate binding site. Residue Cys157 coordinates [4Fe-4S] cluster. A (2E)-4-hydroxy-3-methylbut-2-enyl diphosphate-binding site is contributed by His185. Residue His185 participates in dimethylallyl diphosphate binding. His185 is a binding site for isopentenyl diphosphate. Glu187 serves as the catalytic Proton donor. Position 250 (Thr250) interacts with (2E)-4-hydroxy-3-methylbut-2-enyl diphosphate. Cys288 serves as a coordination point for [4Fe-4S] cluster. Positions 317, 318, 319, and 380 each coordinate (2E)-4-hydroxy-3-methylbut-2-enyl diphosphate. Residues Ser317, Ser318, Asn319, and Ser380 each contribute to the dimethylallyl diphosphate site. Ser317, Ser318, Asn319, and Ser380 together coordinate isopentenyl diphosphate.

Belongs to the IspH family. [4Fe-4S] cluster serves as cofactor.

The catalysed reaction is isopentenyl diphosphate + 2 oxidized [2Fe-2S]-[ferredoxin] + H2O = (2E)-4-hydroxy-3-methylbut-2-enyl diphosphate + 2 reduced [2Fe-2S]-[ferredoxin] + 2 H(+). The enzyme catalyses dimethylallyl diphosphate + 2 oxidized [2Fe-2S]-[ferredoxin] + H2O = (2E)-4-hydroxy-3-methylbut-2-enyl diphosphate + 2 reduced [2Fe-2S]-[ferredoxin] + 2 H(+). Its pathway is isoprenoid biosynthesis; dimethylallyl diphosphate biosynthesis; dimethylallyl diphosphate from (2E)-4-hydroxy-3-methylbutenyl diphosphate: step 1/1. It participates in isoprenoid biosynthesis; isopentenyl diphosphate biosynthesis via DXP pathway; isopentenyl diphosphate from 1-deoxy-D-xylulose 5-phosphate: step 6/6. Catalyzes the conversion of 1-hydroxy-2-methyl-2-(E)-butenyl 4-diphosphate (HMBPP) into a mixture of isopentenyl diphosphate (IPP) and dimethylallyl diphosphate (DMAPP). Acts in the terminal step of the DOXP/MEP pathway for isoprenoid precursor biosynthesis. The chain is 4-hydroxy-3-methylbut-2-enyl diphosphate reductase from Prochlorococcus marinus (strain MIT 9301).